A 280-amino-acid chain; its full sequence is Bifunctional protein FolD (280 aa).

NADP(+) contacts are provided by residues 166 to 168 (GRS) and Ser191.

This sequence belongs to the tetrahydrofolate dehydrogenase/cyclohydrolase family. As to quaternary structure, homodimer.

The catalysed reaction is (6R)-5,10-methylene-5,6,7,8-tetrahydrofolate + NADP(+) = (6R)-5,10-methenyltetrahydrofolate + NADPH. It catalyses the reaction (6R)-5,10-methenyltetrahydrofolate + H2O = (6R)-10-formyltetrahydrofolate + H(+). Its pathway is one-carbon metabolism; tetrahydrofolate interconversion. Catalyzes the oxidation of 5,10-methylenetetrahydrofolate to 5,10-methenyltetrahydrofolate and then the hydrolysis of 5,10-methenyltetrahydrofolate to 10-formyltetrahydrofolate. The polypeptide is Bifunctional protein FolD (Cellvibrio japonicus (strain Ueda107) (Pseudomonas fluorescens subsp. cellulosa)).